A 351-amino-acid polypeptide reads, in one-letter code: Fe-S cluster assembly protein DRE2 (351 aa).

Residues 1-151 (MATTGRVLLL…KPDIGAQQAI (151 aa)) form an N-terminal SAM-like domain region. 2 disordered regions span residues 93–118 (RNRE…RYND) and 157–186 (RRRK…PSSN). Composition is skewed to polar residues over residues 105–114 (GNGSNANSSR) and 167–186 (TLAS…PSSN). The tract at residues 152 to 243 (PLKLSRRRKE…EDELLDEDDM (92 aa)) is linker. 4 residues coordinate [2Fe-2S] cluster: cysteine 253, cysteine 264, cysteine 267, and cysteine 269. Residues 253–269 (CRPKPGKRRRACKDCSC) form a fe-S binding site A region. Cysteine 314, cysteine 317, cysteine 325, and cysteine 328 together coordinate [4Fe-4S] cluster. 2 consecutive short sequence motifs (cx2C motif) follow at residues 314–317 (CGNC) and 325–328 (CDGC). The interval 314–328 (CGNCSLGDAFRCDGC) is fe-S binding site B.

It belongs to the anamorsin family. Monomer. Interacts with TAH18. Interacts with MIA40. [2Fe-2S] cluster is required as a cofactor. It depends on [4Fe-4S] cluster as a cofactor.

The protein resides in the cytoplasm. The protein localises to the mitochondrion intermembrane space. Functionally, component of the cytosolic iron-sulfur (Fe-S) protein assembly (CIA) machinery required for the maturation of extramitochondrial Fe-S proteins. Part of an electron transfer chain functioning in an early step of cytosolic Fe-S biogenesis, facilitating the de novo assembly of a [4Fe-4S] cluster on the scaffold complex CFD1-NBP35. Electrons are transferred to DRE2 from NADPH via the FAD- and FMN-containing protein TAH18. TAH18-DRE2 are also required for the assembly of the diferric tyrosyl radical cofactor of ribonucleotide reductase (RNR), probably by providing electrons for reduction during radical cofactor maturation in the catalytic small subunit RNR2. In Ajellomyces capsulatus (strain NAm1 / WU24) (Darling's disease fungus), this protein is Fe-S cluster assembly protein DRE2.